We begin with the raw amino-acid sequence, 259 residues long: Ubiquinone/menaquinone biosynthesis C-methyltransferase UbiE (259 aa).

S-adenosyl-L-methionine contacts are provided by residues T82, D103, 131-132, and S148; that span reads NA.

Belongs to the class I-like SAM-binding methyltransferase superfamily. MenG/UbiE family.

It carries out the reaction a 2-demethylmenaquinol + S-adenosyl-L-methionine = a menaquinol + S-adenosyl-L-homocysteine + H(+). It catalyses the reaction a 2-methoxy-6-(all-trans-polyprenyl)benzene-1,4-diol + S-adenosyl-L-methionine = a 5-methoxy-2-methyl-3-(all-trans-polyprenyl)benzene-1,4-diol + S-adenosyl-L-homocysteine + H(+). Its pathway is quinol/quinone metabolism; menaquinone biosynthesis; menaquinol from 1,4-dihydroxy-2-naphthoate: step 2/2. It participates in cofactor biosynthesis; ubiquinone biosynthesis. Functionally, methyltransferase required for the conversion of demethylmenaquinol (DMKH2) to menaquinol (MKH2) and the conversion of 2-polyprenyl-6-methoxy-1,4-benzoquinol (DDMQH2) to 2-polyprenyl-3-methyl-6-methoxy-1,4-benzoquinol (DMQH2). The chain is Ubiquinone/menaquinone biosynthesis C-methyltransferase UbiE from Haemophilus ducreyi (strain 35000HP / ATCC 700724).